Here is a 161-residue protein sequence, read N- to C-terminus: N5-carboxyaminoimidazole ribonucleotide mutase (161 aa).

Serine 9, aspartate 12, and arginine 39 together coordinate substrate.

The protein belongs to the AIR carboxylase family. Class I subfamily.

It carries out the reaction 5-carboxyamino-1-(5-phospho-D-ribosyl)imidazole + H(+) = 5-amino-1-(5-phospho-D-ribosyl)imidazole-4-carboxylate. It functions in the pathway purine metabolism; IMP biosynthesis via de novo pathway; 5-amino-1-(5-phospho-D-ribosyl)imidazole-4-carboxylate from 5-amino-1-(5-phospho-D-ribosyl)imidazole (N5-CAIR route): step 2/2. Functionally, catalyzes the conversion of N5-carboxyaminoimidazole ribonucleotide (N5-CAIR) to 4-carboxy-5-aminoimidazole ribonucleotide (CAIR). This is N5-carboxyaminoimidazole ribonucleotide mutase from Vibrio cholerae serotype O1 (strain ATCC 39315 / El Tor Inaba N16961).